Consider the following 306-residue polypeptide: Curved DNA-binding protein (306 aa).

Residues 5 to 69 (DYYAIMGVKP…QRRAEYDQMW (65 aa)) enclose the J domain.

The protein resides in the cytoplasm. Its subcellular location is the nucleoid. Functionally, DNA-binding protein that preferentially recognizes a curved DNA sequence. It is probably a functional analog of DnaJ; displays overlapping activities with DnaJ, but functions under different conditions, probably acting as a molecular chaperone in an adaptive response to environmental stresses other than heat shock. Lacks autonomous chaperone activity; binds native substrates and targets them for recognition by DnaK. Its activity is inhibited by the binding of CbpM. In Shigella dysenteriae serotype 1 (strain Sd197), this protein is Curved DNA-binding protein.